A 371-amino-acid chain; its full sequence is Alanine racemase (371 aa).

Catalysis depends on lysine 40, which acts as the Proton acceptor; specific for D-alanine. At lysine 40 the chain carries N6-(pyridoxal phosphate)lysine. Arginine 138 is a substrate binding site. Tyrosine 267 functions as the Proton acceptor; specific for L-alanine in the catalytic mechanism. Methionine 314 serves as a coordination point for substrate.

Belongs to the alanine racemase family. Pyridoxal 5'-phosphate serves as cofactor.

It carries out the reaction L-alanine = D-alanine. Its pathway is amino-acid biosynthesis; D-alanine biosynthesis; D-alanine from L-alanine: step 1/1. Catalyzes the interconversion of L-alanine and D-alanine. May also act on other amino acids. The chain is Alanine racemase (alr) from Ligilactobacillus salivarius (strain UCC118) (Lactobacillus salivarius).